A 140-amino-acid polypeptide reads, in one-letter code: Small ribosomal subunit protein uS12 (140 aa).

Residue aspartate 103 is modified to 3-methylthioaspartic acid. The segment at 120 to 140 is disordered; that stretch reads GVQKRMQARSKYGAKRPKKGK. Basic residues predominate over residues 125–140; the sequence is MQARSKYGAKRPKKGK.

This sequence belongs to the universal ribosomal protein uS12 family. Part of the 30S ribosomal subunit. Contacts proteins S8 and S17. May interact with IF1 in the 30S initiation complex.

Functionally, with S4 and S5 plays an important role in translational accuracy. Interacts with and stabilizes bases of the 16S rRNA that are involved in tRNA selection in the A site and with the mRNA backbone. Located at the interface of the 30S and 50S subunits, it traverses the body of the 30S subunit contacting proteins on the other side and probably holding the rRNA structure together. The combined cluster of proteins S8, S12 and S17 appears to hold together the shoulder and platform of the 30S subunit. This Desulfitobacterium hafniense (strain Y51) protein is Small ribosomal subunit protein uS12.